Reading from the N-terminus, the 477-residue chain is Glycogen synthase (477 aa).

Lys-15 contacts ADP-alpha-D-glucose.

Belongs to the glycosyltransferase 1 family. Bacterial/plant glycogen synthase subfamily.

It carries out the reaction [(1-&gt;4)-alpha-D-glucosyl](n) + ADP-alpha-D-glucose = [(1-&gt;4)-alpha-D-glucosyl](n+1) + ADP + H(+). It participates in glycan biosynthesis; glycogen biosynthesis. Its function is as follows. Synthesizes alpha-1,4-glucan chains using ADP-glucose. The protein is Glycogen synthase of Shigella boydii serotype 4 (strain Sb227).